Here is a 256-residue protein sequence, read N- to C-terminus: Pimeloyl-[acyl-carrier protein] methyl ester esterase (256 aa).

The AB hydrolase-1 domain occupies 15 to 242 (HLVLLHGWGL…AAHAPFISHP (228 aa)). Residues Trp-22, 82 to 83 (SL), and 143 to 147 (FLALQ) each bind substrate. Ser-82 serves as the catalytic Nucleophile. Residues Asp-207 and His-235 contribute to the active site. Residue His-235 participates in substrate binding.

Belongs to the AB hydrolase superfamily. Carboxylesterase BioH family. In terms of assembly, monomer.

The protein localises to the cytoplasm. The catalysed reaction is 6-carboxyhexanoyl-[ACP] methyl ester + H2O = 6-carboxyhexanoyl-[ACP] + methanol + H(+). The protein operates within cofactor biosynthesis; biotin biosynthesis. Functionally, the physiological role of BioH is to remove the methyl group introduced by BioC when the pimeloyl moiety is complete. It allows to synthesize pimeloyl-ACP via the fatty acid synthetic pathway through the hydrolysis of the ester bonds of pimeloyl-ACP esters. The chain is Pimeloyl-[acyl-carrier protein] methyl ester esterase from Shigella dysenteriae serotype 1 (strain Sd197).